The primary structure comprises 465 residues: Probable dipeptidase A (465 aa).

Cys3 is an active-site residue.

Belongs to the peptidase C69 family.

It catalyses the reaction an L-aminoacyl-L-amino acid + H2O = 2 an L-alpha-amino acid. The sequence is that of Probable dipeptidase A (pepDA) from Streptococcus pyogenes serotype M3 (strain SSI-1).